A 322-amino-acid polypeptide reads, in one-letter code: uncharacterized protein (322 aa).

Positions 1–27 (MKRLFWNLKHKKAWLVLLLGTGMILSS) are cleaved as a signal peptide. Residue cysteine 28 is the site of N-palmitoyl cysteine attachment. Residue cysteine 28 is the site of S-diacylglycerol cysteine attachment. The span at 235–254 (DNSTNPNAPGSGQGDSTPPA) shows a compositional bias: polar residues. The segment at 235–298 (DNSTNPNAPG…AVQRSQKSYG (64 aa)) is disordered. Residues 257–267 (GEGGGSDGSSG) show a composition bias toward gly residues. The segment covering 274–296 (NGQNTTPTSPQSSQPAVQRSQKS) has biased composition (polar residues).

It is found in the cell membrane. This is an uncharacterized protein from Mycoplasma genitalium (strain ATCC 33530 / DSM 19775 / NCTC 10195 / G37) (Mycoplasmoides genitalium).